Reading from the N-terminus, the 240-residue chain is uncharacterized protein (240 aa).

The interval 26-52 (DYVDDGESLPTRQSVKNQREQKKKQGK) is disordered. A helical membrane pass occupies residues 57 to 77 (LFTVLAVIFVFVPVIVLVTLF). Residues 100-185 (KYEVVPKSED…QPAEPVQNVP (86 aa)) form a disordered region. Residues 103-159 (VVPKSEDKNDTADTKETALQKESKKEPEDSKPKEQTAADKKQTAVAEKEDSPNKEEA) are compositionally biased toward basic and acidic residues. The segment covering 160 to 185 (TAAAASSSQSTVQQQEQPAEPVQNVP) has biased composition (low complexity). A LysM domain is found at 189 to 235 (VKHTVQKKETLYRISMKYYKSRTGEEKIRAYNHLNGNDVYTGQVLDI).

It is found in the membrane. This is an uncharacterized protein from Bacillus subtilis (strain 168).